The following is a 305-amino-acid chain: 3-methyl-2-oxobutanoate hydroxymethyltransferase (305 aa).

Residues D52 and D95 each contribute to the Mg(2+) site. 3-methyl-2-oxobutanoate is bound by residues 52-53, D95, and K125; that span reads DS. E127 lines the Mg(2+) pocket. Catalysis depends on E194, which acts as the Proton acceptor.

Belongs to the PanB family. As to quaternary structure, homodecamer; pentamer of dimers. The cofactor is Mg(2+).

It is found in the cytoplasm. It carries out the reaction 3-methyl-2-oxobutanoate + (6R)-5,10-methylene-5,6,7,8-tetrahydrofolate + H2O = 2-dehydropantoate + (6S)-5,6,7,8-tetrahydrofolate. Its pathway is cofactor biosynthesis; (R)-pantothenate biosynthesis; (R)-pantoate from 3-methyl-2-oxobutanoate: step 1/2. In terms of biological role, catalyzes the reversible reaction in which hydroxymethyl group from 5,10-methylenetetrahydrofolate is transferred onto alpha-ketoisovalerate to form ketopantoate. This chain is 3-methyl-2-oxobutanoate hydroxymethyltransferase, found in Anaeromyxobacter sp. (strain Fw109-5).